Consider the following 465-residue polypeptide: Probable inactive receptor-like kinase BSK12 (465 aa).

Positions 1 to 12 (MGCCYSLSSTVD) are enriched in polar residues. The tract at residues 1–34 (MGCCYSLSSTVDPVQDHTTDASSEPRNGGGEDPP) is disordered. Gly2 carries N-myristoyl glycine lipidation. 2 S-palmitoyl cysteine lipidation sites follow: Cys3 and Cys4. One can recognise a Protein kinase domain in the interval 50-291 (FSPENIVSDQ…KEIVATLETL (242 aa)). ATP-binding positions include 56 to 64 (VSDQTSDVV) and Lys78.

The protein belongs to the protein kinase superfamily. Ser/Thr protein kinase family. As to quaternary structure, interacts with YDA. In terms of processing, diacylation-mediated membrane association is essential for BSK12 function. As to expression, expressed at the mRNA level in the sperm cells in mature pollen, but the protein is only detectable in the zygote and the micropylar endosperm upon fertilization.

It localises to the cell membrane. Its function is as follows. Probable inactive protein kinase that activates the YODA MAP kinase cascade, which regulates the asymmetric first division and embryo polarity, by promoting the elongation of the zygote and the development of its basal daughter cell into the extra-embryonic suspensor. Acts as an adapter at the plasma membrane, possibly by recruiting and binding an activator. The polypeptide is Probable inactive receptor-like kinase BSK12 (Arabidopsis thaliana (Mouse-ear cress)).